The following is a 289-amino-acid chain: Lipoyl synthase (289 aa).

[4Fe-4S] cluster contacts are provided by C33, C38, C44, C59, C63, C66, and S274. The 219-residue stretch at 45–263 (FAGGTATFLI…SQGESELGFL (219 aa)) folds into the Radical SAM core domain.

This sequence belongs to the radical SAM superfamily. Lipoyl synthase family. [4Fe-4S] cluster serves as cofactor.

It localises to the cytoplasm. The enzyme catalyses [[Fe-S] cluster scaffold protein carrying a second [4Fe-4S](2+) cluster] + N(6)-octanoyl-L-lysyl-[protein] + 2 oxidized [2Fe-2S]-[ferredoxin] + 2 S-adenosyl-L-methionine + 4 H(+) = [[Fe-S] cluster scaffold protein] + N(6)-[(R)-dihydrolipoyl]-L-lysyl-[protein] + 4 Fe(3+) + 2 hydrogen sulfide + 2 5'-deoxyadenosine + 2 L-methionine + 2 reduced [2Fe-2S]-[ferredoxin]. It participates in protein modification; protein lipoylation via endogenous pathway; protein N(6)-(lipoyl)lysine from octanoyl-[acyl-carrier-protein]: step 2/2. Catalyzes the radical-mediated insertion of two sulfur atoms into the C-6 and C-8 positions of the octanoyl moiety bound to the lipoyl domains of lipoate-dependent enzymes, thereby converting the octanoylated domains into lipoylated derivatives. This is Lipoyl synthase from Synechococcus sp. (strain RCC307).